Here is a 1072-residue protein sequence, read N- to C-terminus: Error-prone DNA polymerase (1072 aa).

It belongs to the DNA polymerase type-C family. DnaE2 subfamily.

Its subcellular location is the cytoplasm. It catalyses the reaction DNA(n) + a 2'-deoxyribonucleoside 5'-triphosphate = DNA(n+1) + diphosphate. In terms of biological role, DNA polymerase involved in damage-induced mutagenesis and translesion synthesis (TLS). It is not the major replicative DNA polymerase. This chain is Error-prone DNA polymerase, found in Burkholderia pseudomallei (strain K96243).